The chain runs to 449 residues: Malonyl-CoA:anthocyanidin 5-O-glucoside-6''-O-malonyltransferase (449 aa).

Met1 carries the post-translational modification N-acetylmethionine. Catalysis depends on proton acceptor residues His162 and Asp394.

This sequence belongs to the plant acyltransferase family. As to expression, expressed in flowers. Detected in leaves, stems, roots and siliques.

It catalyses the reaction anthocyanin A3 + malonyl-CoA = anthocyanin A5 + CoA. It carries out the reaction anthocyanin A7 + malonyl-CoA = anthocyanin A9 + CoA. The enzyme catalyses anthocyanin A6 + malonyl-CoA = anthocyanin A8 + CoA. The catalysed reaction is anthocyanin A10 + malonyl-CoA = anthocyanin A11 + CoA. Functionally, catalyzes the malonylation of the 5-O-glucose residue of anthocyanins, using malonyl-CoA as the malonyl donor. Acts only on anthocyanin substrates containing a 5-O-glucosyl moiety. Acts on the four native A.thaliana anthocyanins, A3, A7, and to a lesser extent, A6 and A10. Can also use the non-native anthocyanin compounds cyanin (cyanidin 3,5-diglucoside), malvin, pelargonidin 3,5-diglucoside, peonidin 3,5-diglucoside, cyanidin 3-coumaroylglucoside 5-glucoside, delphinidin 3-coumaroylrutinoside 5-glucoside and petunidin 3-coumaroylrutinoside 5-glucoside as substrates. Is the sole enzyme responsible for producing malonylated anthocyanin 5-O-glucosides in A.thaliana. Is not able to catalyze acyl transfer using acetyl-CoA, butyryl-CoA, hexanoyl-CoA, benzoyl-CoA, cinnamoyl-CoA, methylmalonyl-CoA, succinyl-CoA, p-coumaroyl-CoA or caffeoyl-CoA. This Arabidopsis thaliana (Mouse-ear cress) protein is Malonyl-CoA:anthocyanidin 5-O-glucoside-6''-O-malonyltransferase (5MAT).